Reading from the N-terminus, the 439-residue chain is GTPase Der (439 aa).

EngA-type G domains lie at 4-169 (AMVS…PQEE) and 177-352 (IKIA…EEYN). GTP is bound by residues 10 to 17 (GRPNVGKS), 57 to 61 (DTGGL), 120 to 123 (NKVD), 183 to 190 (GKPNVGKS), 230 to 234 (DTAGI), and 295 to 298 (NKWD). Residues 353 to 437 (KRITTGLLNN…PVVISTRKRG (85 aa)) enclose the KH-like domain.

It belongs to the TRAFAC class TrmE-Era-EngA-EngB-Septin-like GTPase superfamily. EngA (Der) GTPase family. In terms of assembly, associates with the 50S ribosomal subunit.

In terms of biological role, GTPase that plays an essential role in the late steps of ribosome biogenesis. The sequence is that of GTPase Der from Thermoanaerobacter pseudethanolicus (strain ATCC 33223 / 39E) (Clostridium thermohydrosulfuricum).